A 60-amino-acid polypeptide reads, in one-letter code: Large ribosomal subunit protein uL30 (60 aa).

The protein belongs to the universal ribosomal protein uL30 family. Part of the 50S ribosomal subunit.

This Shewanella woodyi (strain ATCC 51908 / MS32) protein is Large ribosomal subunit protein uL30.